We begin with the raw amino-acid sequence, 509 residues long: Thymus-specific serine protease (509 aa).

An N-terminal signal peptide occupies residues 1 to 22 (MAVKAPWLGFLLLVSLWGLSTP). 2 N-linked (GlcNAc...) asparagine glycosylation sites follow: Asn-69 and Asn-171. The Charge relay system role is filled by Ser-184. The N-linked (GlcNAc...) asparagine glycan is linked to Asn-320. Catalysis depends on charge relay system residues Asp-446 and His-471.

Belongs to the peptidase S28 family. In terms of tissue distribution, expressed predominantly in cortical thymic epithelial cells, with highest expression around vessels and the thymic capsule.

It is found in the cytoplasmic vesicle. Functionally, protease that may play a role in T-cell development. The polypeptide is Thymus-specific serine protease (Prss16) (Mus musculus (Mouse)).